Consider the following 37-residue polypeptide: Large ribosomal subunit protein bL36 (37 aa).

Belongs to the bacterial ribosomal protein bL36 family.

This is Large ribosomal subunit protein bL36 from Persephonella marina (strain DSM 14350 / EX-H1).